Reading from the N-terminus, the 366-residue chain is Anhydro-N-acetylmuramic acid kinase (366 aa).

10–17 (GTSMDGID) provides a ligand contact to ATP.

It belongs to the anhydro-N-acetylmuramic acid kinase family.

The catalysed reaction is 1,6-anhydro-N-acetyl-beta-muramate + ATP + H2O = N-acetyl-D-muramate 6-phosphate + ADP + H(+). The protein operates within amino-sugar metabolism; 1,6-anhydro-N-acetylmuramate degradation. It participates in cell wall biogenesis; peptidoglycan recycling. In terms of biological role, catalyzes the specific phosphorylation of 1,6-anhydro-N-acetylmuramic acid (anhMurNAc) with the simultaneous cleavage of the 1,6-anhydro ring, generating MurNAc-6-P. Is required for the utilization of anhMurNAc either imported from the medium or derived from its own cell wall murein, and thus plays a role in cell wall recycling. This Legionella pneumophila (strain Paris) protein is Anhydro-N-acetylmuramic acid kinase.